The following is a 144-amino-acid chain: MAASKVKQDMPPPGGYGPIDYKRNLPRRGLSGYSMLAIGIGTLIYGHWSIMKWNRERRRLQIEDFEARIALLPLLQAETDRRTLQMLRENLEEEAIIMKDVPDWKVGESVFHTTRWVPPLIGELYGLRTTEEALHASHGFMWYT.

An N-acetylalanine modification is found at alanine 2. A helical transmembrane segment spans residues 30-51 (LSGYSMLAIGIGTLIYGHWSIM). The tract at residues 102-144 (PDWKVGESVFHTTRWVPPLIGELYGLRTTEEALHASHGFMWYT) is important for inducing cell death.

This sequence belongs to the complex I NDUFA13 subunit family. As to quaternary structure, complex I is composed of 45 different subunits. Interacts with CARD15, but not with CARD4. Interacts with STAT3, but not with STAT1, STAT2 and STAT5A. Interacts with OLFM4. (Microbial infection) Interacts with HHV-8 IRF1, in the nucleus, with HPV-16 E6 and SV40 LT. In terms of tissue distribution, widely expressed, with highest expression in heart, skeletal muscle, liver, kidney and placenta. In intestinal mucosa, down-regulated in areas involved in Crohn disease and ulcerative colitis.

It is found in the mitochondrion inner membrane. Its subcellular location is the nucleus. Its function is as follows. Accessory subunit of the mitochondrial membrane respiratory chain NADH dehydrogenase (Complex I), that is believed not to be involved in catalysis. Complex I functions in the transfer of electrons from NADH to the respiratory chain. The immediate electron acceptor for the enzyme is believed to be ubiquinone. Involved in the interferon/all-trans-retinoic acid (IFN/RA) induced cell death. This apoptotic activity is inhibited by interaction with viral IRF1. Prevents the transactivation of STAT3 target genes. May play a role in CARD15-mediated innate mucosal responses and serve to regulate intestinal epithelial cell responses to microbes. The sequence is that of NADH dehydrogenase [ubiquinone] 1 alpha subcomplex subunit 13 (NDUFA13) from Homo sapiens (Human).